The primary structure comprises 345 residues: Phosphoribosylformylglycinamidine cyclo-ligase (345 aa).

It belongs to the AIR synthase family.

It localises to the cytoplasm. The enzyme catalyses 2-formamido-N(1)-(5-O-phospho-beta-D-ribosyl)acetamidine + ATP = 5-amino-1-(5-phospho-beta-D-ribosyl)imidazole + ADP + phosphate + H(+). It functions in the pathway purine metabolism; IMP biosynthesis via de novo pathway; 5-amino-1-(5-phospho-D-ribosyl)imidazole from N(2)-formyl-N(1)-(5-phospho-D-ribosyl)glycinamide: step 2/2. The polypeptide is Phosphoribosylformylglycinamidine cyclo-ligase (Pasteurella multocida (strain Pm70)).